The chain runs to 373 residues: SAM domain-containing protein SAMSN-1 (373 aa).

The interval 1 to 72 is disordered; the sequence is MLKRKPSNVS…GGGLGKKMRA (72 aa). Positions 20–25 match the Important for interaction with 14-3-3 proteins motif; that stretch reads RSSSFG. Residues Ser-23 and Ser-34 each carry the phosphoserine modification. The segment covering 37 to 48 has biased composition (basic and acidic residues); that stretch reads KPDDSTEAHEGD. Positions 50–61 are enriched in polar residues; sequence TNGSGEQSKTSN. At Ser-74 the chain carries Phosphoserine. Thr-76 carries the post-translational modification Phosphothreonine. A phosphoserine mark is found at Ser-90 and Ser-119. The segment at 91 to 153 is disordered; that stretch reads EEKDEEDGEN…DGTSNRDSFR (63 aa). Low complexity predominate over residues 123 to 146; sequence SDSMDSLYSGQSSSSGITSCSDGT. A Phosphotyrosine modification is found at Tyr-160. The SH3 domain occupies 163–224; it reads PFCGRARVHT…KFIYVDVISE (62 aa). The 65-residue stretch at 241–305 folds into the SAM domain; sequence KKSKTLQEFL…LSAAENFLEE (65 aa). A disordered region spans residues 337 to 359; that stretch reads DSGCYISSGNSDNGKEDLESENL.

In terms of assembly, interacts with FASLG. Interacts with phosphotyrosine containing proteins. Interacts (via SH3 domain) with CTTN. Interacts (phosphorylated at Ser-23) with YWHAB, YWHAE, YWHAG, YWHAH, YWHAZ and SFN. Interacts directly with SAP30 and HDAC1. Identified in a complex with SAP30 and HDAC1. Detected in peripheral blood B-cells (at protein level). Detected in spleen, liver and peripheral blood.

The protein resides in the nucleus. It is found in the cytoplasm. It localises to the cell projection. Its subcellular location is the ruffle. Negative regulator of B-cell activation. Down-regulates cell proliferation (in vitro). Promotes RAC1-dependent membrane ruffle formation and reorganization of the actin cytoskeleton. Regulates cell spreading and cell polarization. Stimulates HDAC1 activity. Regulates LYN activity by modulating its tyrosine phosphorylation. The sequence is that of SAM domain-containing protein SAMSN-1 (SAMSN1) from Homo sapiens (Human).